The following is a 237-amino-acid chain: Small ribosomal subunit protein uS2c (237 aa).

The protein belongs to the universal ribosomal protein uS2 family.

It is found in the plastid. This is Small ribosomal subunit protein uS2c (rps2) from Epifagus virginiana (Beechdrops).